The following is a 131-amino-acid chain: uncharacterized protein (131 aa).

The 117-residue stretch at 14–130 folds into the MSP domain; the sequence is FLLIYSSLEV…RRLPASFLST (117 aa).

This is an uncharacterized protein from Caenorhabditis elegans.